We begin with the raw amino-acid sequence, 780 residues long: MTHEEHHATKTLGIGKAIAVLTSGGDAQGMNAAVRAVVRVGIFTGARVFFVHEGYQGLVDGGDHIKEATWESVSMMLQLGGTVIGSARCKDFREREGRLRAAYNLVKRGITNLCVIGGDGSLTGADTFRSEWSDLLSDLQKAGKITDEEATKSSYLNIVGLVGSIDNDFCGTDMTIGTDSALHRIIEIVDAITTTAQSHQRTIVLEVMGRHCGYLALVTSLSCGADWVFIPECPPDDDWEEHLCRRLSETRTRGSRLNIIIVAEGAIDKNGKPITSEDIKNLVVKRLGYDTRVTVLGHVQRGGTPSAFDRILGSRMGVEAVMALLEGTPDTPACVVSLSGNQAVRLPLMECVQVTKDVTKAMDEKKFDEALKLRGRSFMNNWEVYKLLAHVRPPVSKSGSHTVAVMNVGAPAAGMNAAVRSTVRIGLIQGNRVLVVHDGFEGLAKGQIEEAGWSYVGGWTGQGGSKLGTKRTLPKKSFEQISANITKFNIQGLVIIGGFEAYTGGLELMEGRKQFDELCIPFVVIPATVSNNVPGSDFSVGADTALNTICTTCDRIKQSAAGTKRRVFIIETMGGYCGHLATMAGLAAGADAAYIFGEPFTIRDLQANVEHLVQKMKTTVKRGLVLRNEKCNENYTTDFIFNLYSEEGKGIFDSRKNVLGHMQQGGSPTPFDRNFATKMGAKAMNWMSGKIKESYRNGRIFANTPDSGCVLGMRKRALVFQPVAELKDQTDFEHRIPKEQWWLKLRPILKILAKYEIDLDTSDHAHLEHITRKRSGEAAV.

T2 carries the N-acetylthreonine modification. Residues 2 to 390 form an N-terminal catalytic PFK domain 1 region; that stretch reads THEEHHATKT…NWEVYKLLAH (389 aa). ATP is bound by residues G25, 88-89, and 118-121; these read RC and GDGS. D119 is a Mg(2+) binding site. Position 133 is a phosphoserine (S133). Substrate is bound by residues 164 to 166, R201, 208 to 210, E264, R292, and 298 to 301; these read SID, MGR, and HVQR. The Proton acceptor role is filled by D166. S377 is modified (phosphoserine). The segment at 391-401 is interdomain linker; it reads VRPPVSKSGSH. The C-terminal regulatory PFK domain 2 stretch occupies residues 402–780; the sequence is TVAVMNVGAP…TRKRSGEAAV (379 aa). Beta-D-fructose 2,6-bisphosphate-binding positions include R471 and 528-532; that span reads TVSNN. S530 carries O-linked (GlcNAc) serine glycosylation. K557 bears the N6-(2-hydroxyisobutyryl)lysine mark. Beta-D-fructose 2,6-bisphosphate contacts are provided by residues R566, 573-575, E629, R655, and 661-664; these read MGG and HMQQ. Phosphoserine is present on S667. A beta-D-fructose 2,6-bisphosphate-binding site is contributed by R735. S775 is modified (phosphoserine).

It belongs to the phosphofructokinase type A (PFKA) family. ATP-dependent PFK group I subfamily. Eukaryotic two domain clade 'E' sub-subfamily. Homo- and heterotetramers. Phosphofructokinase (PFK) enzyme functions as a tetramer composed of different combinations of 3 types of subunits, called PFKM (M), PFKL (L) and PFKP (P). The composition of the PFK tetramer differs according to the tissue type it is present in. The kinetic and regulatory properties of the tetrameric enzyme are dependent on the subunit composition, hence can vary across tissues. Interacts (via C-terminus) with HK1 (via N-terminal spermatogenic cell-specific region). Mg(2+) serves as cofactor. Post-translationally, glcNAcylation decreases enzyme activity.

It localises to the cytoplasm. The catalysed reaction is beta-D-fructose 6-phosphate + ATP = beta-D-fructose 1,6-bisphosphate + ADP + H(+). It functions in the pathway carbohydrate degradation; glycolysis; D-glyceraldehyde 3-phosphate and glycerone phosphate from D-glucose: step 3/4. Allosterically activated by ADP, AMP, or fructose 2,6-bisphosphate, and allosterically inhibited by ATP or citrate. Catalyzes the phosphorylation of D-fructose 6-phosphate to fructose 1,6-bisphosphate by ATP, the first committing step of glycolysis. In Pongo abelii (Sumatran orangutan), this protein is ATP-dependent 6-phosphofructokinase, muscle type (PFKM).